Consider the following 65-residue polypeptide: Light-harvesting protein B800/830/1020 beta-2 chain (65 aa).

Residues 1–17 (TDIRTGLTDEECQEIHE) lie on the Cytoplasmic side of the membrane. His16 and Asn34 together coordinate a bacteriochlorophyll. A helical transmembrane segment spans residues 18 to 40 (MNMLGMHAYWSIGLIANALAYAW). At 41 to 65 (RPFHQGRAGNRLEDHAPDYVRSALT) the chain is on the periplasmic side.

This sequence belongs to the antenna complex beta subunit family. As to quaternary structure, the core complex is formed by different alpha and beta chains, binding bacteriochlorophyll molecules, and arranged most probably in tetrameric structures disposed around the reaction center. The non-pigmented gamma chains may constitute additional components.

The protein localises to the cell inner membrane. Its function is as follows. Antenna complexes are light-harvesting systems, which transfer the excitation energy to the reaction centers. This is Light-harvesting protein B800/830/1020 beta-2 chain from Halorhodospira halochloris (Ectothiorhodospira halochloris).